Consider the following 79-residue polypeptide: Putative antitoxin VapB12 (79 aa).

This sequence belongs to the UPF0330 family.

In terms of biological role, possibly the antitoxin component of a type II toxin-antitoxin (TA) system. Its cognate toxin is VapC12 (Potential). This chain is Putative antitoxin VapB12 (vapB12), found in Sulfurisphaera tokodaii (strain DSM 16993 / JCM 10545 / NBRC 100140 / 7) (Sulfolobus tokodaii).